The chain runs to 435 residues: Ribulose bisphosphate carboxylase/oxygenase activase 2, chloroplastic (435 aa).

The transit peptide at 1–56 (MAAAYSTVGAVNRAPLSLNGSGARASLVPSTAFFGSSLKKSAAKFPKASSGNFKIV) directs the protein to the chloroplast. 165–172 (GGKGQGKS) serves as a coordination point for ATP.

The protein belongs to the RuBisCO activase family.

It is found in the plastid. The protein localises to the chloroplast stroma. Activation of RuBisCO (ribulose-1,5-bisphosphate carboxylase/oxygenase; EC 4.1.1.39) involves the ATP-dependent carboxylation of the epsilon-amino group of lysine leading to a carbamate structure. The chain is Ribulose bisphosphate carboxylase/oxygenase activase 2, chloroplastic (RCA2) from Larrea tridentata (Creosote bush).